Reading from the N-terminus, the 155-residue chain is 6,7-dimethyl-8-ribityllumazine synthase (155 aa).

5-amino-6-(D-ribitylamino)uracil contacts are provided by residues Phe23, Ala57–Glu59, and Ala81–Ile83. Residue Ser86–Thr87 participates in (2S)-2-hydroxy-3-oxobutyl phosphate binding. The active-site Proton donor is the His89. Phe114 provides a ligand contact to 5-amino-6-(D-ribitylamino)uracil. A (2S)-2-hydroxy-3-oxobutyl phosphate-binding site is contributed by Arg128.

Belongs to the DMRL synthase family.

The enzyme catalyses (2S)-2-hydroxy-3-oxobutyl phosphate + 5-amino-6-(D-ribitylamino)uracil = 6,7-dimethyl-8-(1-D-ribityl)lumazine + phosphate + 2 H2O + H(+). It participates in cofactor biosynthesis; riboflavin biosynthesis; riboflavin from 2-hydroxy-3-oxobutyl phosphate and 5-amino-6-(D-ribitylamino)uracil: step 1/2. Its function is as follows. Catalyzes the formation of 6,7-dimethyl-8-ribityllumazine by condensation of 5-amino-6-(D-ribitylamino)uracil with 3,4-dihydroxy-2-butanone 4-phosphate. This is the penultimate step in the biosynthesis of riboflavin. The chain is 6,7-dimethyl-8-ribityllumazine synthase from Trichlorobacter lovleyi (strain ATCC BAA-1151 / DSM 17278 / SZ) (Geobacter lovleyi).